A 236-amino-acid polypeptide reads, in one-letter code: 2-C-methyl-D-erythritol 4-phosphate cytidylyltransferase (236 aa).

Belongs to the IspD/TarI cytidylyltransferase family. IspD subfamily.

It catalyses the reaction 2-C-methyl-D-erythritol 4-phosphate + CTP + H(+) = 4-CDP-2-C-methyl-D-erythritol + diphosphate. It functions in the pathway isoprenoid biosynthesis; isopentenyl diphosphate biosynthesis via DXP pathway; isopentenyl diphosphate from 1-deoxy-D-xylulose 5-phosphate: step 2/6. Catalyzes the formation of 4-diphosphocytidyl-2-C-methyl-D-erythritol from CTP and 2-C-methyl-D-erythritol 4-phosphate (MEP). The protein is 2-C-methyl-D-erythritol 4-phosphate cytidylyltransferase of Burkholderia thailandensis (strain ATCC 700388 / DSM 13276 / CCUG 48851 / CIP 106301 / E264).